The following is a 428-amino-acid chain: NADP-specific glutamate dehydrogenase (428 aa).

2 residues coordinate substrate: Lys68 and Lys92. The active-site Proton donor is Lys104. Residues Thr188 and Asn219 each contribute to the NADP(+) site. Ser356 is a substrate binding site.

Belongs to the Glu/Leu/Phe/Val dehydrogenases family. In terms of assembly, homohexamer.

The catalysed reaction is L-glutamate + NADP(+) + H2O = 2-oxoglutarate + NH4(+) + NADPH + H(+). Its function is as follows. Catalyzes the reversible oxidative deamination of glutamate to alpha-ketoglutarate and ammonia. In Synechocystis sp. (strain ATCC 27184 / PCC 6803 / Kazusa), this protein is NADP-specific glutamate dehydrogenase (gdhA).